We begin with the raw amino-acid sequence, 510 residues long: ATP synthase subunit alpha (510 aa).

An ATP-binding site is contributed by 169–176 (GDRQTGKT).

This sequence belongs to the ATPase alpha/beta chains family. As to quaternary structure, F-type ATPases have 2 components, CF(1) - the catalytic core - and CF(0) - the membrane proton channel. CF(1) has five subunits: alpha(3), beta(3), gamma(1), delta(1), epsilon(1). CF(0) has three main subunits: a(1), b(2) and c(9-12). The alpha and beta chains form an alternating ring which encloses part of the gamma chain. CF(1) is attached to CF(0) by a central stalk formed by the gamma and epsilon chains, while a peripheral stalk is formed by the delta and b chains.

It is found in the cell membrane. It carries out the reaction ATP + H2O + 4 H(+)(in) = ADP + phosphate + 5 H(+)(out). Its function is as follows. Produces ATP from ADP in the presence of a proton gradient across the membrane. The alpha chain is a regulatory subunit. The protein is ATP synthase subunit alpha of Buchnera aphidicola subsp. Schizaphis graminum (strain Sg).